Reading from the N-terminus, the 242-residue chain is MFRRKLTALEYHNPTGFDCKDETEFRNFIVWLEDQKIRHYKIEDRGNLRNIPSSDWPKYFEKYLQDVNCPFSVQERQETVDWLLGLAVRFEYGDNVEKYRNCKPVTETNDVQKSADPLINLDSNNPDFKAGVLALANLLKIQRHDDYLVMLKAIKILVQERLTPDAIAKASQAKEGLPVTLDKHILGFDTGDATLNEAAQVLRLLHIEELRELQTKINEAIVAVQAIIADPKTDHRLGKVGR.

Belongs to the RTRAF family. As to quaternary structure, homodimer. Component of a tRNA-splicing ligase complex.

Its subcellular location is the nucleus. It is found in the cytoplasm. The protein resides in the cytosol. It localises to the perinuclear region. The protein localises to the cytoskeleton. Its subcellular location is the microtubule organizing center. It is found in the centrosome. In terms of biological role, RNA-binding protein involved in modulation of mRNA transcription by Polymerase II. Component of the tRNA-splicing ligase complex. The chain is RNA transcription, translation and transport factor protein from Danio rerio (Zebrafish).